A 256-amino-acid polypeptide reads, in one-letter code: Transcription factor CAULIFLOWER (256 aa).

The MADS-box domain maps to 1-61; sequence MGRGRVQLKR…GKLFEYTSES (61 aa). A K-box domain is found at 90-180; it reads QPNWSMEYSR…TKQIKERENI (91 aa).

Homodimer capable of binding to CArG-box sequences.

It is found in the nucleus. In terms of biological role, probable transcription factor that promotes early floral meristem identity in synergy with APETALA1, FRUITFULL and LEAFY. Is required subsequently for the transition of an inflorescence meristem into a floral meristem. Seems to be partially redundant to the function of APETALA1. This chain is Transcription factor CAULIFLOWER (CAL), found in Arabidopsis lyrata subsp. lyrata (Lyre-leaved rock-cress).